A 213-amino-acid polypeptide reads, in one-letter code: MVEPLKLALSKGRIFQEILPLLAIAGIYPRDDPKTSRKLVLDTNQADLKLVIIRAADVPTYVEYGAADFGVAGKDVLLEHPGNGLYEPLDLRIACCRMMVAGEPEVTPRSGRLRIATKYVHSTRRFYAERGEQVEVIKLYGSMELAPLVGLADRIVDLVDTGNTLRANGLAPLEHITDISSRLVVNKASMKMRHQRIKKFICLMAEAVEKQHG.

It belongs to the ATP phosphoribosyltransferase family. Short subfamily. As to quaternary structure, heteromultimer composed of HisG and HisZ subunits.

It is found in the cytoplasm. The catalysed reaction is 1-(5-phospho-beta-D-ribosyl)-ATP + diphosphate = 5-phospho-alpha-D-ribose 1-diphosphate + ATP. It functions in the pathway amino-acid biosynthesis; L-histidine biosynthesis; L-histidine from 5-phospho-alpha-D-ribose 1-diphosphate: step 1/9. Its function is as follows. Catalyzes the condensation of ATP and 5-phosphoribose 1-diphosphate to form N'-(5'-phosphoribosyl)-ATP (PR-ATP). Has a crucial role in the pathway because the rate of histidine biosynthesis seems to be controlled primarily by regulation of HisG enzymatic activity. The chain is ATP phosphoribosyltransferase from Nitrosococcus oceani (strain ATCC 19707 / BCRC 17464 / JCM 30415 / NCIMB 11848 / C-107).